A 1985-amino-acid polypeptide reads, in one-letter code: Non-reducing polyketide synthase ntnG (1985 aa).

The N-terminal acylcarrier protein transacylase (SAT) domain stretch occupies residues 7–243; the sequence is LLFGDQADAP…TILPAFGAVH (237 aa). The 429-residue stretch at 364–792 folds into the Ketosynthase family 3 (KS3) domain; it reads SGSVAIIGMS…GGNSCFVLEE (429 aa). Residues cysteine 536, histidine 671, and histidine 711 each act as for beta-ketoacyl synthase activity in the active site. The malonyl-CoA:ACP transacylase (MAT) domain stretch occupies residues 889 to 1148; that stretch reads VFAFTGQGAH…VNFEQAISHC (260 aa). Serine 980 (for acyl/malonyl transferase activity) is an active-site residue. The interval 1261 to 1392 is N-terminal hotdog fold; sequence HRLVKQEDTA…VRLRDEHAFD (132 aa). Residues 1261–1567 form the PKS/mFAS DH domain; sequence HRLVKQEDTA…FRKMPRTTLH (307 aa). The product template (PT) domain stretch occupies residues 1265–1566; the sequence is KQEDTAKEQH…RFRKMPRTTL (302 aa). Residue histidine 1293 is the Proton acceptor; for dehydratase activity of the active site. The C-terminal hotdog fold stretch occupies residues 1414–1567; the sequence is AGGRANRFQG…FRKMPRTTLH (154 aa). The active-site Proton donor; for dehydratase activity is the aspartate 1479. Residues 1578–1605 are compositionally biased toward polar residues; that stretch reads NTKQVPHPTTNGSAIANGVNRNPSHNEP. Residues 1578–1622 are disordered; sequence NTKQVPHPTTNGSAIANGVNRNPSHNEPSTPPVANGVNGTNGDQS. The Carrier domain occupies 1622 to 1699; the sequence is SDRKSLYSVL…DAQRELRRLE (78 aa). The residue at position 1659 (serine 1659) is an O-(pantetheine 4'-phosphoryl)serine. The tract at residues 1719–1913 is thioesterase (TE) domain; the sequence is TRECNVVLMQ…DCTFVIWAKK (195 aa).

It participates in secondary metabolite biosynthesis; terpenoid biosynthesis. In terms of biological role, non-reducing polyketide synthase; part of the gene cluster that mediates the biosynthesis of the meroterpenoids nectripenoids A and B, as well as cochliquninone D and isocochliquninone E. The pathway probably begins with the HR-PKS ntnH that catalyzes two chain-extension steps to form a reduced triketide, which then primes the SAT domain in the NR-PKS ntnG to initiate three more cycles of extension to give a linear hexaketide corresponding to the polyketide part of nectripenoids. The FAD-dependent monooxygenase ntnJ then performs an oxidative decarboxylation at C11 of the ntnH/ntnG product, via an electrophilic aromatic hydroxylation with concomitant ipso-decarboxylation. The membrane-bound polyprenyl transferase ntnF then introduces a farnesyl group before the FAD-dependent monooxygenase ntnK functions as the first epoxidase on terminal C12'-C13' olefin, followed by a second epoxidation on C7'-C8' catalyzed by ntnA. The terpene cyclase/mutase ntnI then initiates the sequential tricyclic ring formation through protonation of the terminal epoxide and catalyzes the regioselective and stereoselective 6/6/6-tricyclic ring formation. The cytochrome P450 monooxygenase ntnM may then hydroxylate C1'. This Nectria sp protein is Non-reducing polyketide synthase ntnG.